A 389-amino-acid chain; its full sequence is Serpentine receptor class alpha/beta-14 (389 aa).

The Extracellular portion of the chain corresponds to 1 to 45; that stretch reads MPSDDFVKTARKALISHSVSIQNYTEDDCQIAFHATTNSFMQTIR. Residue Asn23 is glycosylated (N-linked (GlcNAc...) asparagine). The chain crosses the membrane as a helical span at residues 46–66; it reads LVHIFFCTFGAISSSLFIYVL. Residues 67 to 81 lie on the Cytoplasmic side of the membrane; the sequence is LNSSSRNLHRNLRIS. The helical transmembrane segment at 82–102 threads the bilayer; the sequence is LASLAFAALIACLQLDFIAFY. Residues 103–123 are Extracellular-facing; sequence HLALTLTADNACDSMYEARKC. A disulfide bond links Cys123 and Cys198. A helical transmembrane segment spans residues 124 to 144; it reads AILRFPVVLSIYATLCGIIVL. Residues 145–167 are Cytoplasmic-facing; the sequence is AIERTIATLKYKTYEANGSRVVG. A helical membrane pass occupies residues 168 to 188; sequence LVLVTGQWFVCIIVAVFSVLL. Topologically, residues 189 to 208 are extracellular; sequence RSDPGYVHYCTAYVSHPRTS. Residues 209 to 229 traverse the membrane as a helical segment; that stretch reads VFSLCFMSALEVATLVYFVLL. Residues 230 to 268 lie on the Cytoplasmic side of the membrane; sequence LQSNQRRQVNEFVNKAMHSLSERYQLQENVRIMKILIPS. A helical membrane pass occupies residues 269 to 289; the sequence is ITVHAILGFIGLGSMLAFAII. The Extracellular portion of the chain corresponds to 290–303; that stretch reads YRYADERLIVGFAP. Residues 304–324 form a helical membrane-spanning segment; the sequence is FSEVVLLVIPIYAVVFPIVAV. At 325-389 the chain is on the cytoplasmic side; sequence VQNKQLRLAS…FDLLNEMWKK (65 aa).

It belongs to the nematode receptor-like protein srab family.

The protein resides in the membrane. This Caenorhabditis elegans protein is Serpentine receptor class alpha/beta-14.